The chain runs to 212 residues: Imidazole glycerol phosphate synthase subunit HisH (212 aa).

Residues 3 to 212 (TVAVIDYGMG…QNFAAWDGRW (210 aa)) enclose the Glutamine amidotransferase type-1 domain. Residue Cys81 is the Nucleophile of the active site. Catalysis depends on residues His190 and Glu192.

Heterodimer of HisH and HisF.

Its subcellular location is the cytoplasm. The catalysed reaction is 5-[(5-phospho-1-deoxy-D-ribulos-1-ylimino)methylamino]-1-(5-phospho-beta-D-ribosyl)imidazole-4-carboxamide + L-glutamine = D-erythro-1-(imidazol-4-yl)glycerol 3-phosphate + 5-amino-1-(5-phospho-beta-D-ribosyl)imidazole-4-carboxamide + L-glutamate + H(+). The enzyme catalyses L-glutamine + H2O = L-glutamate + NH4(+). It functions in the pathway amino-acid biosynthesis; L-histidine biosynthesis; L-histidine from 5-phospho-alpha-D-ribose 1-diphosphate: step 5/9. Functionally, IGPS catalyzes the conversion of PRFAR and glutamine to IGP, AICAR and glutamate. The HisH subunit catalyzes the hydrolysis of glutamine to glutamate and ammonia as part of the synthesis of IGP and AICAR. The resulting ammonia molecule is channeled to the active site of HisF. The polypeptide is Imidazole glycerol phosphate synthase subunit HisH (Pseudomonas syringae pv. syringae (strain B728a)).